We begin with the raw amino-acid sequence, 667 residues long: E3 ubiquitin-protein ligase Midline-1 (667 aa).

The RING-type zinc-finger motif lies at 10 to 60 (CPICLELFEDPLLLPCAHSLCFNCAHRILVSHCATNESVESITAFQCPTCR). 2 positions are modified to phosphoserine: Ser-92 and Ser-96. B box-type zinc fingers lie at residues 116–165 (KVLC…IEPI) and 172–212 (GLMC…VAAL). 12 residues coordinate Zn(2+): Cys-119, Cys-122, Cys-134, Cys-137, Cys-142, Cys-145, His-150, His-159, Cys-175, His-178, Cys-198, and His-204. Residues 205 to 264 (RDHQVAALSERYDKLKQNLESNLTNLIKRNTELETLLAKLIQTCQHVEVNASRQEAKLTE) adopt a coiled-coil conformation. One can recognise a COS domain in the interval 320–379 (LKENDHARFLQTAKNITERVSMATASSQVLIPEINLNDTFDTFALDFSREKKLLECLDYL). The Fibronectin type-III domain maps to 381–484 (APNPPTIREE…EPGKLKTNSQ (104 aa)). Over residues 471–485 (SRSSEPGKLKTNSQP) the composition is skewed to polar residues. Residues 471-524 (SRSSEPGKLKTNSQPFKLDPKSAHRKLKVSHDNLTVERDESSSKKSHTPERFTS) form a disordered region. Positions 482-659 (NSQPFKLDPK…IITGLPIPDH (178 aa)) constitute a B30.2/SPRY domain. Positions 499–520 (VSHDNLTVERDESSSKKSHTPE) are enriched in basic and acidic residues. The residue at position 511 (Ser-511) is a Phosphoserine.

Belongs to the TRIM/RBCC family. Homodimer or heterodimer with MID2. Interacts with IGBP1. Interacts with TRIM16. In terms of processing, phosphorylated on serine and threonine residues. In the fetus, highest expression found in kidney, followed by brain and lung. Expressed at low levels in fetal liver. In the adult, most abundant in heart, placenta and brain.

The protein resides in the cytoplasm. It is found in the cytoskeleton. The protein localises to the spindle. The enzyme catalyses S-ubiquitinyl-[E2 ubiquitin-conjugating enzyme]-L-cysteine + [acceptor protein]-L-lysine = [E2 ubiquitin-conjugating enzyme]-L-cysteine + N(6)-ubiquitinyl-[acceptor protein]-L-lysine.. Its function is as follows. Has E3 ubiquitin ligase activity towards IGBP1, promoting its monoubiquitination, which results in deprotection of the catalytic subunit of protein phosphatase PP2A, and its subsequent degradation by polyubiquitination. In Homo sapiens (Human), this protein is E3 ubiquitin-protein ligase Midline-1 (MID1).